A 221-amino-acid chain; its full sequence is Thymidylate kinase (221 aa).

12-19 (GIDGAGKS) contacts ATP.

Belongs to the thymidylate kinase family.

It carries out the reaction dTMP + ATP = dTDP + ADP. In terms of biological role, phosphorylation of dTMP to form dTDP in both de novo and salvage pathways of dTTP synthesis. The polypeptide is Thymidylate kinase (Paracidovorax citrulli (strain AAC00-1) (Acidovorax citrulli)).